We begin with the raw amino-acid sequence, 108 residues long: MDIVKVCPELHIVMDVDSGLIAEMRKDILVVDLHPVEDEINKLAQYAKALENSLDPRNTPMKAYAGREGTYKLAGMFQGMFFGFWVTMAVLVLVTILAVKMNLSLIGL.

A helical transmembrane segment spans residues 77 to 99 (FQGMFFGFWVTMAVLVLVTILAV).

The protein belongs to the MtrB family. As to quaternary structure, the complex is composed of 8 subunits; MtrA, MtrB, MtrC, MtrD, MtrE, MtrF, MtrG and MtrH.

Its subcellular location is the cell membrane. It carries out the reaction 5-methyl-5,6,7,8-tetrahydromethanopterin + coenzyme M + 2 Na(+)(in) = 5,6,7,8-tetrahydromethanopterin + methyl-coenzyme M + 2 Na(+)(out). The protein operates within one-carbon metabolism; methanogenesis from CO(2); methyl-coenzyme M from 5,10-methylene-5,6,7,8-tetrahydromethanopterin: step 2/2. In terms of biological role, part of a complex that catalyzes the formation of methyl-coenzyme M and tetrahydromethanopterin from coenzyme M and methyl-tetrahydromethanopterin. This is an energy-conserving, sodium-ion translocating step. The chain is Tetrahydromethanopterin S-methyltransferase subunit B from Methanococcus maripaludis (strain DSM 14266 / JCM 13030 / NBRC 101832 / S2 / LL).